Reading from the N-terminus, the 921-residue chain is Collagen alpha-1(IX) chain (921 aa).

Positions 1 to 23 (MKTCWKIPVFFFVCSFLEPWASA) are cleaved as a signal peptide. The interval 24–268 (AVKRRPRFPV…ITPSQTTDER (245 aa)) is nonhelical region (NC4). 2 cysteine pairs are disulfide-bonded: Cys44-Cys242 and Cys198-Cys252. Residues 50–244 (GQDDLPGFDL…LQWMLIHCDP (195 aa)) enclose the Laminin G-like domain. Asn171 is a glycosylation site (N-linked (GlcNAc...) asparagine). Residues Asp213, Asp215, and His253 each contribute to the Zn(2+) site. Disordered regions lie at residues 254–759 (ELPA…APTD) and 783–905 (RPDS…EPAS). 8 Collagen-like domains span residues 269–324 (GPPG…TPGA), 325–356 (DGLTGPDGSPGSIGSKGQKGEPGVPGSRGFPG), 358–403 (GIPG…GTIG), 416–472 (PPGR…GLRG), 473–516 (ITGI…AGPK), 587–643 (EKGS…GKLG), 655–712 (GPPG…GEPG), and 713–755 (LRGP…PPGR). Residues 269–405 (GPPGEQGPPG…PGPRGTIGFH (137 aa)) form a triple-helical region (COL3) region. Pro residues-rich tracts occupy residues 273–285 (EQGPPGPPGPPGV) and 298–307 (KGPPGPPGPA). Over residues 368–383 (TAGLPGELGRVGPVGD) the composition is skewed to low complexity. The span at 387–398 (RGPPGPPGPPGP) shows a compositional bias: pro residues. The segment at 406 to 417 (DGDPLCPNACPP) is nonhelical region (NC3). Residues 418 to 756 (GRSGYPGLPG…PGVQGPPGRA (339 aa)) are triple-helical region (COL2). The span at 479 to 489 (DKGEKGARGLD) shows a compositional bias: basic and acidic residues. Low complexity-rich tracts occupy residues 602 to 621 (NSGKPGQQGPPGEVGPRGPQ) and 630 to 650 (LGPVGSPGLPGKLGSLGSPGL). The interval 757 to 786 (PTDQHIKQVCMRVIQEHFAEMAASLKRPDS) is nonhelical region (NC2). The tract at residues 787-901 (GATGLPGRPG…PGPPGLPGFC (115 aa)) is triple-helical region (COL1). 2 consecutive Collagen-like domains span residues 790–847 (GLPG…GPPG) and 848–899 (RGPN…GLPG). Residues 794–804 (RPGPPGPPGPP) are compositionally biased toward pro residues. A compositionally biased stretch (basic and acidic residues) spans 833–845 (PKGDLGEKGERGP). Over residues 888–897 (VPGPPGPPGL) the composition is skewed to pro residues. The interval 902–921 (EPASCTMQAGQRAFNKGPDP) is nonhelical region (NC1).

This sequence belongs to the fibril-associated collagens with interrupted helices (FACIT) family. In terms of assembly, heterotrimer of an alpha 1(IX), an alpha 2(IX) and an alpha 3(IX) chain. Post-translationally, covalently linked to the telopeptides of type II collagen by lysine-derived cross-links. In terms of processing, prolines at the third position of the tripeptide repeating unit (G-X-Y) are hydroxylated in some or all of the chains.

The protein localises to the secreted. The protein resides in the extracellular space. It is found in the extracellular matrix. Structural component of hyaline cartilage and vitreous of the eye. This is Collagen alpha-1(IX) chain (COL9A1) from Homo sapiens (Human).